The sequence spans 518 residues: Two-component response regulator-like PRR1 (518 aa).

A Response regulatory domain is found at 29–147; the sequence is RILLCDSDPS…ELLNLWTHVW (119 aa). 3 disordered regions span residues 172-241, 266-305, and 483-518; these read PSDA…PGVM, TPTT…GTDV, and VRQA…SSPE. A compositionally biased stretch (polar residues) spans 196–212; it reads NQETSTSNQHEYESNPS. The CCT domain maps to 443 to 485; sequence RAAALAKFRLKRKERCFDKKVRYVNRKKLAETRPRVRGQFVRQ.

This sequence belongs to the ARR-like family. In terms of assembly, interacts with PIL13. Interacts with PIL15.

It localises to the nucleus. Functionally, controls photoperiodic flowering response. Seems to be one of the component of the circadian clock. Expression of several members of the ARR-like family is controlled by circadian rhythm. The particular coordinated sequential expression of PRR73, PRR37, PRR95, PRR59 and PPR1 result to circadian waves that may be at the basis of the endogenous circadian clock. This Oryza sativa subsp. japonica (Rice) protein is Two-component response regulator-like PRR1 (PRR1).